Reading from the N-terminus, the 303-residue chain is Propanal dehydrogenase (CoA-propanoylating) (303 aa).

Residue 12-15 (SGNI) participates in NAD(+) binding. The active-site Acyl-thioester intermediate is Cys-127. NAD(+)-binding positions include 158–166 (SAGPGTRAN) and Asn-277.

Belongs to the acetaldehyde dehydrogenase family. In terms of assembly, monomer. Forms a heterotetramer composed of two aldolase (HsaF) and two dehydrogenase (HsaG) subunits.

It carries out the reaction propanal + NAD(+) + CoA = propanoyl-CoA + NADH + H(+). The enzyme catalyses acetaldehyde + NAD(+) + CoA = acetyl-CoA + NADH + H(+). Functionally, involved in cholesterol degradation. Catalyzes the conversion of propanal to propanoyl-CoA, using NAD(+) and coenzyme A. The sequence is that of Propanal dehydrogenase (CoA-propanoylating) from Mycobacterium bovis (strain ATCC BAA-935 / AF2122/97).